The chain runs to 123 residues: Chaperone protein SycN (123 aa).

Interacts with YscB to form a complex which specifically binds to YopN.

It localises to the cytoplasm. It is found in the cell inner membrane. Functions as a specific chaperone for YopN. It could facilitate the secretion and the subsequent translocation of YopN. The sequence is that of Chaperone protein SycN (sycN) from Yersinia pseudotuberculosis serotype I (strain IP32953).